A 929-amino-acid polypeptide reads, in one-letter code: Protocadherin gamma-B3 (929 aa).

A signal peptide spans 1–30 (MGNSSGWRGPAGQRRMLFLFLLSLLDQALS). 6 Cadherin domains span residues 31-133 (EPIR…PPTF), 134-242 (SQNI…PPVF), 243-347 (TQDM…APEI), 348-452 (TLAS…VPVF), 453-562 (HQAS…APLV), and 570-675 (EGSA…QPDL). Topologically, residues 31 to 691 (EPIRYAIPEE…SDPQAELQFH (661 aa)) are extracellular. Asn-136 carries N-linked (GlcNAc...) asparagine glycosylation. 2 N-linked (GlcNAc...) asparagine glycosylation sites follow: Asn-419 and Asn-545. A helical transmembrane segment spans residues 692–712 (LVVALALISVLFLLAVILAIS). Topologically, residues 713-929 (LRLRCSSRPA…KKKSGKKEKK (217 aa)) are cytoplasmic. Disordered stretches follow at residues 791–838 (NDNP…WPNN) and 899–929 (ATLTNAAGKRDGKAPAGGNGNKKKSGKKEKK). Positions 919–929 (NKKKSGKKEKK) are enriched in basic residues.

It is found in the cell membrane. Functionally, potential calcium-dependent cell-adhesion protein. May be involved in the establishment and maintenance of specific neuronal connections in the brain. The polypeptide is Protocadherin gamma-B3 (PCDHGB3) (Homo sapiens (Human)).